A 279-amino-acid chain; its full sequence is Small ribosomal subunit protein uS2 (279 aa).

Composition is skewed to acidic residues over residues 1–18 (MTEN…DEAV), 28–42 (TATE…DESN), and 65–81 (ADAE…FDED). Positions 1–81 (MTENDNEVVE…ELEGPTFDED (81 aa)) are disordered.

Belongs to the universal ribosomal protein uS2 family.

This chain is Small ribosomal subunit protein uS2, found in Haloquadratum walsbyi (strain DSM 16790 / HBSQ001).